A 34-amino-acid chain; its full sequence is Photosystem II reaction center protein M (34 aa).

A helical membrane pass occupies residues 5 to 25 (ILALIAVALFISIPTAFLVII).

Belongs to the PsbM family. PSII is composed of 1 copy each of membrane proteins PsbA, PsbB, PsbC, PsbD, PsbE, PsbF, PsbH, PsbI, PsbJ, PsbK, PsbL, PsbM, PsbT, PsbX, PsbY, PsbZ, Psb30/Ycf12, at least 3 peripheral proteins of the oxygen-evolving complex and a large number of cofactors. It forms dimeric complexes.

It localises to the plastid. Its subcellular location is the chloroplast thylakoid membrane. Functionally, one of the components of the core complex of photosystem II (PSII). PSII is a light-driven water:plastoquinone oxidoreductase that uses light energy to abstract electrons from H(2)O, generating O(2) and a proton gradient subsequently used for ATP formation. It consists of a core antenna complex that captures photons, and an electron transfer chain that converts photonic excitation into a charge separation. This subunit is found at the monomer-monomer interface. This Welwitschia mirabilis (Tree tumbo) protein is Photosystem II reaction center protein M.